The sequence spans 547 residues: Pyochelin synthase PchD (547 aa).

Belongs to the ATP-dependent AMP-binding enzyme family.

The catalysed reaction is salicylate + holo-[ACP] + ATP = salicyl-[ACP] + AMP + diphosphate. It functions in the pathway siderophore biosynthesis. It participates in antifungal biosynthesis. Its function is as follows. Involved in the biosynthesis of the siderophore pyochelin. Specifically adenylates salicylate and loads it onto the holo form of PchE via a thioester linkage to the phosphopanthetheine moiety. Is also involved in the synthesis of the antifungal antibiotic dihydroaeruginoic acid (Dha or hydroxyphenyl-thiazolinyl-carboxylate), a precursor of pyochelin. The polypeptide is Pyochelin synthase PchD (Pseudomonas aeruginosa (strain ATCC 15692 / DSM 22644 / CIP 104116 / JCM 14847 / LMG 12228 / 1C / PRS 101 / PAO1)).